The following is a 493-amino-acid chain: Glutamyl-tRNA(Gln) amidotransferase subunit A (493 aa).

Residues K79 and S159 each act as charge relay system in the active site. S183 functions as the Acyl-ester intermediate in the catalytic mechanism.

Belongs to the amidase family. GatA subfamily. As to quaternary structure, heterotrimer of A, B and C subunits.

It catalyses the reaction L-glutamyl-tRNA(Gln) + L-glutamine + ATP + H2O = L-glutaminyl-tRNA(Gln) + L-glutamate + ADP + phosphate + H(+). Functionally, allows the formation of correctly charged Gln-tRNA(Gln) through the transamidation of misacylated Glu-tRNA(Gln) in organisms which lack glutaminyl-tRNA synthetase. The reaction takes place in the presence of glutamine and ATP through an activated gamma-phospho-Glu-tRNA(Gln). This is Glutamyl-tRNA(Gln) amidotransferase subunit A from Sinorhizobium medicae (strain WSM419) (Ensifer medicae).